Reading from the N-terminus, the 344-residue chain is Follistatin (344 aa).

The first 29 residues, 1 to 29 (MVRPRHQPGGLCLLLLLLCQFMEDRSAQA), serve as a signal peptide directing secretion. The TB domain occupies 30–103 (GNCWLRQAKN…TCDNVDCGPG (74 aa)). Intrachain disulfides connect Cys32/Cys55, Cys42/Cys88, Cys56/Cys91, Cys95/Cys106, Cys100/Cys116, Cys118/Cys150, Cys122/Cys143, Cys132/Cys164, Cys168/Cys179, Cys173/Cys189, Cys192/Cys225, Cys196/Cys218, Cys207/Cys239, Cys245/Cys256, Cys250/Cys267, Cys270/Cys302, Cys274/Cys295, and Cys284/Cys316. In terms of domain architecture, Follistatin-like 1 spans 94-117 (TCDNVDCGPGKKCRMNKKNKPRCV). In terms of domain architecture, Kazal-like 1 spans 112 to 166 (NKPRCVCAPDCSNITWKGPVCGLDGKTYRNECALLKARCKEQPELEVQYQGKCKK). The N-linked (GlcNAc...) asparagine glycan is linked to Asn124. Residues 167–190 (TCRDVNCPGSSTCVVDQTNNAYCV) enclose the Follistatin-like 2 domain. Residues 186–241 (NAYCVTCNRICPEPTSSEQYLCGNDGVTYSSACHLRKATCLLGRSIGLAYEGKCIK) enclose the Kazal-like 2 domain. Residues 244-268 (SCEDIQCTGGKKCLWDFKVGRGRCS) enclose the Follistatin-like 3 domain. The region spanning 264–318 (RGRCSLCDELCPDSKSEEPVCASDNATYASECAMKEAACSSGVLLEVKHSGSCNS) is the Kazal-like 3 domain. An N-linked (GlcNAc...) asparagine glycan is attached at Asn288. The tract at residues 314–344 (GSCNSISEDTEEEEEDEDQDYSFPISSILEW) is disordered. The segment covering 321–333 (EDTEEEEEDEDQD) has biased composition (acidic residues).

Interacts with GDF11. Interacts with activin A/INHBA. Interacts with myostatin/MSTN.

It is found in the secreted. It localises to the nucleus. The protein localises to the nucleolus. Its function is as follows. Multifunctional regulatory protein whose primary function is to antagonize members of the transforming growth factor beta (TGF-beta) superfamily including activin, myostatin, GDF11 or bone morphogenetic proteins (BMPs). Mechanistically, binds to these ligands in the extracellular space, blocking their type II receptor-binding site to inhibit downstream signaling. Plays an essential role in muscle fiber formation and growth both by preventing the repressive effects of myostatin and through SMAD3/AKT/mTOR signaling independently of myostatin. Also promotes neural differentiation by antagonizing the action BMP4. Acts as a specific inhibitor of the biosynthesis and secretion of pituitary follicle stimulating hormone (FSH) by sequestering activin A/INHBA. On the other hand, translocates into the nucleus where it down-regulates rRNA synthesis and ribosome biogenesis to maintain cellular energy homeostasis by binding to rDNA. The sequence is that of Follistatin from Equus caballus (Horse).